Consider the following 257-residue polypeptide: Pyrroline-5-carboxylate reductase (257 aa).

It belongs to the pyrroline-5-carboxylate reductase family.

The protein resides in the cytoplasm. The catalysed reaction is L-proline + NADP(+) = (S)-1-pyrroline-5-carboxylate + NADPH + 2 H(+). It catalyses the reaction L-proline + NAD(+) = (S)-1-pyrroline-5-carboxylate + NADH + 2 H(+). It participates in amino-acid biosynthesis; L-proline biosynthesis; L-proline from L-glutamate 5-semialdehyde: step 1/1. Functionally, catalyzes the reduction of 1-pyrroline-5-carboxylate (PCA) to L-proline. This is Pyrroline-5-carboxylate reductase from Helicobacter pylori (strain ATCC 700392 / 26695) (Campylobacter pylori).